The sequence spans 1181 residues: MDNNPKINECIPYNCLSNPEVEVLGGERIETGYTPIDISLSLTQFLLSEFVPGAGFVLGLIDLIWGFVGPSQWDAFLVQIEQLISQRIEEFARNQAISRLEGLSNLYQIYAEAFREWEADPTNPALREEMRIQFNDMNSALTTAIPLFTVQNYQVPLLSVYVQAVNLHLSVLRDVSVFGQRWGLDVATINSRYNDLTRLIGTYTDYAVRWYNTGLERVWGPDSRDWVRYNQFRRELTLTVLDIVSLFPNYDSRTYPIRTVSQLTREIYTNPVLENFDGSFRGSAQRIEQSIRSPHLMDILNSITIYTDAHGGYYYWSGHQIMASPVGFSGPEFTFPLYGTMGNAAPQQRIVAQLGQGVYRTLSSTFYRNPFIIGINNQRLSVLDGTEFAYGSSSNLPSAVYRKSGTVDSLDEIPPQDNNVPPRQGFSHRLSHVSMFRSGFSNSSVSIIRAPMFSWIHRSAEFNNIIPSSQITQIPLTKSTNLGSGTSVVKGPGFTGGDILRRTSPGQISTLRVNITAPLSQRYRVRIRYASTTNLQFHTSIDGRPINQGNFSATMSSGGNLQSGSFRTVGFTTPFNFSNGSSVFTLSAHVFNSGNEVYIDRIEFVPAEVTFEAEYDLERAQEAVNALFTSPNQIGLKTDVTDYHIDQVSNLVECLSDEFCLDEKRELSEKVKHAKRLSDERNLLQDPNFRGINRQPDRGWRGSTDITIQGGDDVFKENYVTLPGTFDECYPTYLYQKIDESKLKAYTRYELRGYIEDSQDLEIYLIRYNAKHETVNVPGTGSLWPLSFESSIGKCGEPNRCAPHLEWNPDLDCSCRDGEKCAHHSHHFSLDIDVGCIDLNEDLGVWVIFKIKTQDGHARLGNLEFLEEKPLVGEALARVKRAEKKWRDKREKLQLETNIVYKEAKESVDALFVNSQYDQLQADTNIAMIHTADKRVHRIQEAYLPELSVIPGVNAGIFEELEGRIFTAYSLYDARNVIKNGDFNNGLSCWNVKGHVDVEEQNNHRSVLVVPEWEAEVSQEVRVCPGRGYILRVTAYKEGYGEGCVTIHEIENNTDELKFSNCVEEEVYPNNTVTCNEYTANQEEYGGAYTSCNRGYDETYGSNYSVPADYASVYEEKAYTDGRRENPCESNRGYGDYTPLPAGYVTKQLEYFPETDKVWIEIGETEGTFIVDSVELFLMEE.

The protein belongs to the delta endotoxin family.

Promotes colloidosmotic lysis by binding to the midgut epithelial cells of many lepidopteran larvae. This is Pesticidal crystal protein Cry1Ae (cry1Ae) from Bacillus thuringiensis subsp. alesti.